A 261-amino-acid chain; its full sequence is Carbonic anhydrase 1 (261 aa).

Residue A2 is modified to N-acetylalanine. The Alpha-carbonic anhydrase domain occupies 4–261 (PDWGYDDKNG…LKGRTVRASF (258 aa)). Catalysis depends on H65, which acts as the Proton donor/acceptor. Zn(2+)-binding residues include H95, H97, and H120. Residues T200 and 200–201 (TH) each bind substrate. Residues 235 to 261 (EGDNPVPSQRNNRPTQPLKGRTVRASF) are disordered. Polar residues predominate over residues 240–249 (VPSQRNNRPT).

Belongs to the alpha-carbonic anhydrase family. The cofactor is Zn(2+).

Its subcellular location is the cytoplasm. The catalysed reaction is hydrogencarbonate + H(+) = CO2 + H2O. The enzyme catalyses urea = cyanamide + H2O. Inhibited by acetazolamide. Its function is as follows. Catalyzes the reversible hydration of carbon dioxide. Can hydrate cyanamide to urea. This Macaca nemestrina (Pig-tailed macaque) protein is Carbonic anhydrase 1 (CA1).